Reading from the N-terminus, the 427-residue chain is Septin-8-B (427 aa).

One can recognise a Septin-type G domain in the interval 39-305 (QGFCFNILCV…ELYRRCKLEE (267 aa)). The tract at residues 49-56 (GETGIGKS) is G1 motif. Residues 49-56 (GETGIGKS), glycine 104, 185-193 (KADTISKSE), glycine 239, and arginine 254 contribute to the GTP site. Residues 101-104 (DTVG) are G3 motif. The segment at 184–187 (AKAD) is G4 motif. Positions 320 to 407 (LQETYEAKRK…RRKVAMETLQ (88 aa)) form a coiled coil. A compositionally biased stretch (polar residues) spans 406-418 (LQSQSFQATSQQP). Positions 406 to 427 (LQSQSFQATSQQPLKKDKDRKN) are disordered.

Belongs to the TRAFAC class TrmE-Era-EngA-EngB-Septin-like GTPase superfamily. Septin GTPase family.

In Xenopus laevis (African clawed frog), this protein is Septin-8-B (sept8-b).